A 501-amino-acid chain; its full sequence is Lysine--tRNA ligase (501 aa).

Positions 411 and 418 each coordinate Mg(2+).

It belongs to the class-II aminoacyl-tRNA synthetase family. In terms of assembly, homodimer. Mg(2+) serves as cofactor.

It localises to the cytoplasm. The enzyme catalyses tRNA(Lys) + L-lysine + ATP = L-lysyl-tRNA(Lys) + AMP + diphosphate. This chain is Lysine--tRNA ligase, found in Mycolicibacterium gilvum (strain PYR-GCK) (Mycobacterium gilvum (strain PYR-GCK)).